We begin with the raw amino-acid sequence, 253 residues long: Ubiquinone/menaquinone biosynthesis C-methyltransferase UbiE (253 aa).

Residues Thr76, Asp97, and 125-126 (DA) contribute to the S-adenosyl-L-methionine site.

It belongs to the class I-like SAM-binding methyltransferase superfamily. MenG/UbiE family.

It catalyses the reaction a 2-demethylmenaquinol + S-adenosyl-L-methionine = a menaquinol + S-adenosyl-L-homocysteine + H(+). The enzyme catalyses a 2-methoxy-6-(all-trans-polyprenyl)benzene-1,4-diol + S-adenosyl-L-methionine = a 5-methoxy-2-methyl-3-(all-trans-polyprenyl)benzene-1,4-diol + S-adenosyl-L-homocysteine + H(+). The protein operates within quinol/quinone metabolism; menaquinone biosynthesis; menaquinol from 1,4-dihydroxy-2-naphthoate: step 2/2. It functions in the pathway cofactor biosynthesis; ubiquinone biosynthesis. Functionally, methyltransferase required for the conversion of demethylmenaquinol (DMKH2) to menaquinol (MKH2) and the conversion of 2-polyprenyl-6-methoxy-1,4-benzoquinol (DDMQH2) to 2-polyprenyl-3-methyl-6-methoxy-1,4-benzoquinol (DMQH2). The chain is Ubiquinone/menaquinone biosynthesis C-methyltransferase UbiE from Azotobacter vinelandii (strain DJ / ATCC BAA-1303).